The following is a 238-amino-acid chain: Ribosomal RNA small subunit methyltransferase G (238 aa).

S-adenosyl-L-methionine contacts are provided by residues Gly-77, Phe-82, 128–129, and Arg-147; that span reads AE. Residues 216–238 form a disordered region; that stretch reads RKERSTPKKYPRKPGTPNKQPLS.

It belongs to the methyltransferase superfamily. RNA methyltransferase RsmG family.

The protein resides in the cytoplasm. Specifically methylates the N7 position of guanine in position 535 of 16S rRNA. This is Ribosomal RNA small subunit methyltransferase G from Halalkalibacterium halodurans (strain ATCC BAA-125 / DSM 18197 / FERM 7344 / JCM 9153 / C-125) (Bacillus halodurans).